The chain runs to 142 residues: Hemoglobin subunit alpha-2 (142 aa).

Residues 2–142 (VLSPADKTNV…VSTVLTSKYR (141 aa)) form the Globin domain. Histidine 59 lines the O2 pocket. Histidine 88 is a heme b binding site.

The protein belongs to the globin family. Heterotetramer of two alpha chains and two beta chains. Red blood cells.

Involved in oxygen transport from the lung to the various peripheral tissues. The chain is Hemoglobin subunit alpha-2 from Arctocephalus galapagoensis (Galapagoes fur seal).